The following is a 166-amino-acid chain: Small ribosomal subunit protein uS5 (166 aa).

In terms of domain architecture, S5 DRBM spans Leu11–Val74.

This sequence belongs to the universal ribosomal protein uS5 family. In terms of assembly, part of the 30S ribosomal subunit. Contacts proteins S4 and S8.

Functionally, with S4 and S12 plays an important role in translational accuracy. Its function is as follows. Located at the back of the 30S subunit body where it stabilizes the conformation of the head with respect to the body. The protein is Small ribosomal subunit protein uS5 of Pasteurella multocida (strain Pm70).